We begin with the raw amino-acid sequence, 207 residues long: Large ribosomal subunit protein uL4 (207 aa).

A disordered region spans residues 48-87 (THAVKNRSAVSGGGKKPWRQKGTGRARQGSIRSPQFRGGG).

It belongs to the universal ribosomal protein uL4 family. As to quaternary structure, part of the 50S ribosomal subunit.

Its function is as follows. One of the primary rRNA binding proteins, this protein initially binds near the 5'-end of the 23S rRNA. It is important during the early stages of 50S assembly. It makes multiple contacts with different domains of the 23S rRNA in the assembled 50S subunit and ribosome. In terms of biological role, forms part of the polypeptide exit tunnel. The protein is Large ribosomal subunit protein uL4 of Limosilactobacillus reuteri subsp. reuteri (strain JCM 1112) (Lactobacillus reuteri).